A 62-amino-acid chain; its full sequence is Cecropin-A (62 aa).

A signal peptide spans 1–20 (MNLVKILFCVFACLVFTVTA). Positions 21–24 (VPEP) are cleaved as a propeptide — removed by a dipeptidylpeptidase. Thr60 carries the post-translational modification Threonine amide.

This sequence belongs to the cecropin family.

It is found in the secreted. Its function is as follows. Has antibacterial activity. The chain is Cecropin-A from Trichoplusia ni (Cabbage looper).